The following is a 416-amino-acid chain: Putative nucleoside permease NupX (416 aa).

At 1–2 (MD) the chain is on the periplasmic side. Residues 3-23 (VMRSVLGMVVLLTIAFLLSVN) traverse the membrane as a helical segment. Topologically, residues 24–31 (KKKISLRT) are cytoplasmic. A helical transmembrane segment spans residues 32 to 52 (VGAALVLQVVIGGIMLWLPPG). The Periplasmic portion of the chain corresponds to 53–95 (RWVAEKVAFGVHKVMAYSDAGSAFIFGSLVGPKMDTLFDGAGF). Residues 96–118 (IFGFRVLPAIIFVTALVSILYYI) traverse the membrane as a helical segment. The Cytoplasmic segment spans residues 119 to 172 (GVMGILIRILGGIFQKALNISKIESFVAVTTIFLGQNEIPAIVKPFIDRLNRNE). Residues 173–193 (LFTAICSGMASIAGSTMIGYA) form a helical membrane-spanning segment. The Periplasmic portion of the chain corresponds to 194–196 (ALG). A helical membrane pass occupies residues 197 to 217 (VPVEYLLAASLMAIPGGILFA). At 218–246 (RLLSPATESSQVSFNNLSFTETPPKSIIE) the chain is on the cytoplasmic side. A helical transmembrane segment spans residues 247–267 (AAATGAMTGLKIAAGVATVVM). Topologically, residues 268 to 352 (AFVAIIALIN…QTAGTLDAKT (85 aa)) are periplasmic. Residues 353–373 (VAIISFALCGFANFGSIGVVV) traverse the membrane as a helical segment. Topologically, residues 374 to 394 (GAFSAVAPHRAPEIAQLGLRA) are cytoplasmic. The helical transmembrane segment at 395–415 (LAAATLSNLMSATIAGFFIGL) threads the bilayer. A416 is a topological domain (periplasmic).

This sequence belongs to the concentrative nucleoside transporter (CNT) (TC 2.A.41) family.

It localises to the cell inner membrane. This chain is Putative nucleoside permease NupX (nupX), found in Escherichia coli (strain K12).